Here is a 343-residue protein sequence, read N- to C-terminus: Anthranilate phosphoribosyltransferase (343 aa).

5-phospho-alpha-D-ribose 1-diphosphate-binding positions include glycine 84, 87–88 (GD), threonine 92, 94–97 (NIST), 112–120 (KHGNRGVSS), and serine 124. Glycine 84 is an anthranilate binding site. Residue serine 96 coordinates Mg(2+). Anthranilate is bound at residue asparagine 115. Position 170 (arginine 170) interacts with anthranilate. Mg(2+)-binding residues include aspartate 229 and glutamate 230.

The protein belongs to the anthranilate phosphoribosyltransferase family. As to quaternary structure, homodimer. Requires Mg(2+) as cofactor.

The enzyme catalyses N-(5-phospho-beta-D-ribosyl)anthranilate + diphosphate = 5-phospho-alpha-D-ribose 1-diphosphate + anthranilate. It functions in the pathway amino-acid biosynthesis; L-tryptophan biosynthesis; L-tryptophan from chorismate: step 2/5. In terms of biological role, catalyzes the transfer of the phosphoribosyl group of 5-phosphorylribose-1-pyrophosphate (PRPP) to anthranilate to yield N-(5'-phosphoribosyl)-anthranilate (PRA). The polypeptide is Anthranilate phosphoribosyltransferase (Burkholderia thailandensis (strain ATCC 700388 / DSM 13276 / CCUG 48851 / CIP 106301 / E264)).